A 143-amino-acid polypeptide reads, in one-letter code: Peptide methionine sulfoxide reductase MsrB (143 aa).

A MsrB domain is found at 16-139 (DAELRRRLTP…NSAALNFESR (124 aa)). Residues C55, C58, C104, and C107 each contribute to the Zn(2+) site. C128 serves as the catalytic Nucleophile.

This sequence belongs to the MsrB Met sulfoxide reductase family. The cofactor is Zn(2+).

It catalyses the reaction L-methionyl-[protein] + [thioredoxin]-disulfide + H2O = L-methionyl-(R)-S-oxide-[protein] + [thioredoxin]-dithiol. The sequence is that of Peptide methionine sulfoxide reductase MsrB from Burkholderia cenocepacia (strain ATCC BAA-245 / DSM 16553 / LMG 16656 / NCTC 13227 / J2315 / CF5610) (Burkholderia cepacia (strain J2315)).